Reading from the N-terminus, the 431-residue chain is Histidine--tRNA ligase (431 aa).

It belongs to the class-II aminoacyl-tRNA synthetase family.

The protein localises to the cytoplasm. It catalyses the reaction tRNA(His) + L-histidine + ATP = L-histidyl-tRNA(His) + AMP + diphosphate + H(+). The protein is Histidine--tRNA ligase (hisS) of Pyrococcus horikoshii (strain ATCC 700860 / DSM 12428 / JCM 9974 / NBRC 100139 / OT-3).